Reading from the N-terminus, the 542-residue chain is Polysialoglycoprotein (542 aa).

The signal sequence occupies residues 1 to 21 (MIMGGVRELLLVVMTVGVVKV). The propeptide occupies 22 to 120 (SCYPVGKSQK…TSEAATGPSG (99 aa)). Residues 70-542 (EEYLETNEVE…GPSGDDAMDI (473 aa)) form a disordered region. The span at 78–95 (VESQASPNHGSSPANDAL) shows a compositional bias: polar residues. Positions 97-106 (SEEKLRRVSS) are enriched in basic and acidic residues. Low complexity predominate over residues 107 to 116 (DDAATSEAAT). Repeat copies occupy residues 121–133 (DDATSEAATGPSG), 134–146 (DDATSEAATGPSG), 147–159 (DDATSEAATGPSG), 160–172 (DDATSEAATGPSG), 173–185 (DDATSEAATGPSG), 186–198 (DDATSEAATGPSG), 199–211 (DDATSEAATGPSG), 212–224 (DDATSEAATGPSG), 225–237 (DDATSEAATGPSG), 238–250 (DDATSEAATGPSG), 251–263 (DDATSEAATGPSG), 264–276 (DDATSEAATGPSG), 277–289 (DDATSEAATGPSG), 290–302 (DDATSEAATGPSG), 303–315 (DDATSEAATGPSG), 316–328 (DDATSEAATGPSG), 329–341 (DDATSEAATGPSG), 342–354 (DDATSEAATGPSG), 355–367 (DDATSEAATGPSG), 368–380 (DDATSEAATGPSG), 381–393 (DDATSEAATGPSG), 394–406 (DDATSEAATGPSG), 407–419 (DDATSEAATGPSG), 420–432 (DDATSEAATGPSG), 433–445 (DDATSEAATGPSG), 446–458 (DDATSEAATGPSG), 459–471 (DDATSEAATGPSG), 472–484 (DDATSEAATGPSG), 485–497 (DDATSEAATGPSG), 498–510 (DDATSEAATGPSG), 511–523 (DDATSEAATGPSG), and 524–536 (DDATSEAATGPSG). The interval 121 to 536 (DDATSEAATG…TSEAATGPSG (416 aa)) is 32 X 13 AA tandem repeats of D-D-A-T-S-E-A-A-T-G-P-S-G. Residue Thr-124 is glycosylated (O-linked (GalNAc...) threonine). O-linked (GalNAc...) serine glycosylation occurs at Ser-125. O-linked (GalNAc...) threonine glycans are attached at residues Thr-129 and Thr-137. Residue Ser-138 is glycosylated (O-linked (GalNAc...) serine). Thr-142 and Thr-150 each carry an O-linked (GalNAc...) threonine glycan. Residue Ser-151 is glycosylated (O-linked (GalNAc...) serine). Residues Thr-155 and Thr-163 are each glycosylated (O-linked (GalNAc...) threonine). An O-linked (GalNAc...) serine glycan is attached at Ser-164. Thr-168 and Thr-176 each carry an O-linked (GalNAc...) threonine glycan. Ser-177 carries O-linked (GalNAc...) serine glycosylation. Thr-181 and Thr-189 each carry an O-linked (GalNAc...) threonine glycan. O-linked (GalNAc...) serine glycosylation occurs at Ser-190. 2 O-linked (GalNAc...) threonine glycosylation sites follow: Thr-194 and Thr-202. O-linked (GalNAc...) serine glycosylation occurs at Ser-203. Thr-207 and Thr-215 each carry an O-linked (GalNAc...) threonine glycan. The O-linked (GalNAc...) serine glycan is linked to Ser-216. Residues Thr-220 and Thr-228 are each glycosylated (O-linked (GalNAc...) threonine). Ser-229 carries O-linked (GalNAc...) serine glycosylation. Residues Thr-233 and Thr-241 are each glycosylated (O-linked (GalNAc...) threonine). O-linked (GalNAc...) serine glycosylation occurs at Ser-242. O-linked (GalNAc...) threonine glycans are attached at residues Thr-246 and Thr-254. Ser-255 carries an O-linked (GalNAc...) serine glycan. O-linked (GalNAc...) threonine glycans are attached at residues Thr-259 and Thr-267. Ser-268 carries O-linked (GalNAc...) serine glycosylation. Thr-272 and Thr-280 each carry an O-linked (GalNAc...) threonine glycan. The O-linked (GalNAc...) serine glycan is linked to Ser-281. O-linked (GalNAc...) threonine glycosylation is found at Thr-285 and Thr-293. Ser-294 is a glycosylation site (O-linked (GalNAc...) serine). O-linked (GalNAc...) threonine glycosylation is found at Thr-298 and Thr-306. Ser-307 carries O-linked (GalNAc...) serine glycosylation. Thr-311 and Thr-319 each carry an O-linked (GalNAc...) threonine glycan. An O-linked (GalNAc...) serine glycan is attached at Ser-320. 2 O-linked (GalNAc...) threonine glycosylation sites follow: Thr-324 and Thr-332. O-linked (GalNAc...) serine glycosylation is present at Ser-333. 2 O-linked (GalNAc...) threonine glycosylation sites follow: Thr-337 and Thr-345. The O-linked (GalNAc...) serine glycan is linked to Ser-346. Thr-350 and Thr-358 each carry an O-linked (GalNAc...) threonine glycan. Ser-359 carries an O-linked (GalNAc...) serine glycan. Thr-363 and Thr-371 each carry an O-linked (GalNAc...) threonine glycan. Ser-372 is a glycosylation site (O-linked (GalNAc...) serine). O-linked (GalNAc...) threonine glycosylation is found at Thr-376 and Thr-384. O-linked (GalNAc...) serine glycosylation is present at Ser-385. O-linked (GalNAc...) threonine glycosylation is found at Thr-389 and Thr-397. A glycan (O-linked (GalNAc...) serine) is linked at Ser-398. Residues Thr-402 and Thr-410 are each glycosylated (O-linked (GalNAc...) threonine). A glycan (O-linked (GalNAc...) serine) is linked at Ser-411. O-linked (GalNAc...) threonine glycosylation is found at Thr-415 and Thr-423. Residue Ser-424 is glycosylated (O-linked (GalNAc...) serine). Residues Thr-428 and Thr-436 are each glycosylated (O-linked (GalNAc...) threonine). A glycan (O-linked (GalNAc...) serine) is linked at Ser-437. Residues Thr-441 and Thr-449 are each glycosylated (O-linked (GalNAc...) threonine). The O-linked (GalNAc...) serine glycan is linked to Ser-450. 2 O-linked (GalNAc...) threonine glycosylation sites follow: Thr-454 and Thr-462. Ser-463 carries O-linked (GalNAc...) serine glycosylation. O-linked (GalNAc...) threonine glycans are attached at residues Thr-467 and Thr-475. Ser-476 carries an O-linked (GalNAc...) serine glycan. O-linked (GalNAc...) threonine glycosylation is found at Thr-480 and Thr-488. The O-linked (GalNAc...) serine glycan is linked to Ser-489. O-linked (GalNAc...) threonine glycans are attached at residues Thr-493 and Thr-501. O-linked (GalNAc...) serine glycosylation is present at Ser-502. Thr-506 and Thr-514 each carry an O-linked (GalNAc...) threonine glycan. O-linked (GalNAc...) serine glycosylation is present at Ser-515. Thr-519 and Thr-527 each carry an O-linked (GalNAc...) threonine glycan. An O-linked (GalNAc...) serine glycan is attached at Ser-528. O-linked (GalNAc...) threonine glycosylation occurs at Thr-532. A propeptide spanning residues 537–542 (DDAMDI) is cleaved from the precursor.

In terms of processing, most sialic acid residues exist in the form of polysialyl groups partly capped with deaminoneuraminic acid. Cortical alveoli of immature ovaries.

Its function is as follows. In response to egg activation, PSGP is discharged by exocytosis into the perivitelline space, where it undergoes rapid proteolysis into glycotridecapeptides. During fertilization and/or early development the glycotridecapeptides prevent polyspermy or are involved in the formation of a fertilization membrane. This is Polysialoglycoprotein from Oncorhynchus mykiss (Rainbow trout).